The sequence spans 468 residues: GDNF family receptor alpha-1 (468 aa).

A signal peptide spans 1–24 (MFLATLYFALPLLDLLMSAEVSGG). Repeat copies occupy residues 25–113 (DRLD…LQGN), 150–238 (KGNN…YEER), and 239–342 (ERPN…KNAI). Residues cysteine 36 and cysteine 42 are joined by a disulfide bond. N-linked (GlcNAc...) asparagine glycosylation is present at asparagine 59. Disulfide bonds link cysteine 154–cysteine 214, cysteine 161–cysteine 167, cysteine 178–cysteine 192, cysteine 187–cysteine 233, cysteine 216–cysteine 221, cysteine 243–cysteine 313, cysteine 250–cysteine 256, cysteine 267–cysteine 285, cysteine 277–cysteine 337, and cysteine 315–cysteine 325. 2 N-linked (GlcNAc...) asparagine glycosylation sites follow: asparagine 347 and asparagine 406. Serine 430 carries GPI-anchor amidated serine lipidation. Positions 431–468 (HITTKSMAAPPSCSLSSLPVLMLTALAALLSVSLAETS) are cleaved as a propeptide — removed in mature form.

It belongs to the GDNFR family. In terms of assembly, interacts with GDNF ligand and RET: forms a 2:2:2 ternary complex composed of GDNF ligand, GFRA1 and RET receptor. Interacts with SORL1, either alone or in complex with GDNF. Interaction between SORL1 and GFRA1 leads to GFRA1 internalization, but not degradation. Expressed in liver, brain, kidney and cochlea.

The protein resides in the cell membrane. Its subcellular location is the golgi apparatus. The protein localises to the trans-Golgi network. It is found in the endosome. It localises to the multivesicular body. Coreceptor for GDNF, a neurotrophic factor that enhances survival and morphological differentiation of dopaminergic neurons and increases their high-affinity dopamine uptake. GDNF-binding leads to autophosphorylation and activation of the RET receptor. The chain is GDNF family receptor alpha-1 (Gfra1) from Rattus norvegicus (Rat).